The primary structure comprises 173 residues: UPF0598 protein F59C6.12 (173 aa).

It belongs to the UPF0598 family.

In Caenorhabditis elegans, this protein is UPF0598 protein F59C6.12.